A 379-amino-acid chain; its full sequence is MTRPHLKKFRRIVVKVGSSLLIDSAAGKVRGEWLSALAADIAGLHGDGCDVLVVSSGAVALGRSKLKLPRGPLKLEESQAAAAVGQIALARIWSKVLADHGIGAGQILVTWQDTEERRRYLNARSTIAKLLEWRAVPVINENDTVATNEIRYGDNDRLAARVATMASADLLILLSDIDGLYDAPPHLNPDAKLITVVKRVTADIEAMAGSAASELSRGGMRTKIEAAKIATTAGTHMLIASGTIEHPLRAIMDGGPCTWFLTPANPVTARKRWIAGSLEPRGTLAIDAGAVAALRAGKSLLPAGVTRIDGHFARGDAVIVRGPNGHEIGRGLVAYDAADADRIKGRSSSDAAQLLGVRGRVEMIHRDDLVVGGPLGDSA.

Position 15 (Lys-15) interacts with ATP. Residues Ser-56, Asp-143, and Asn-155 each coordinate substrate. Residue 175–176 (SD) participates in ATP binding. The 78-residue stretch at 281-358 (RGTLAIDAGA…SDAAQLLGVR (78 aa)) folds into the PUA domain.

This sequence belongs to the glutamate 5-kinase family.

The protein localises to the cytoplasm. It catalyses the reaction L-glutamate + ATP = L-glutamyl 5-phosphate + ADP. Its pathway is amino-acid biosynthesis; L-proline biosynthesis; L-glutamate 5-semialdehyde from L-glutamate: step 1/2. Its function is as follows. Catalyzes the transfer of a phosphate group to glutamate to form L-glutamate 5-phosphate. In Nitrobacter winogradskyi (strain ATCC 25391 / DSM 10237 / CIP 104748 / NCIMB 11846 / Nb-255), this protein is Glutamate 5-kinase.